A 59-amino-acid chain; its full sequence is Large ribosomal subunit protein bL32 (59 aa).

The disordered stretch occupies residues 1–59; that stretch reads MAVQQNRKTPSKRGMRRSHDSLSKPTLSTEQNTGETHRRHHISADGYYRGRKVTRGQDD. A compositionally biased stretch (polar residues) spans 23–34; that stretch reads SKPTLSTEQNTG. Over residues 49-59 the composition is skewed to basic residues; that stretch reads RGRKVTRGQDD.

This sequence belongs to the bacterial ribosomal protein bL32 family.

In Halorhodospira halophila (strain DSM 244 / SL1) (Ectothiorhodospira halophila (strain DSM 244 / SL1)), this protein is Large ribosomal subunit protein bL32.